The sequence spans 1201 residues: Vitamin B12-dependent ribonucleotide reductase (1201 aa).

Residues serine 153, 198–199 (AC), glycine 230, 482–486 (NPCSE), and 683–687 (PTGTI) contribute to the substrate site. Cysteine 199 and cysteine 495 form a disulfide bridge. Asparagine 482 serves as the catalytic Proton acceptor. Residue cysteine 484 is the Cysteine radical intermediate of the active site. The Proton acceptor role is filled by glutamate 486. A compositionally biased stretch (basic and acidic residues) spans 1100–1118 (DEIGSKRATAESNGQEKET). The disordered stretch occupies residues 1100 to 1120 (DEIGSKRATAESNGQEKETLS).

This sequence belongs to the ribonucleoside diphosphate reductase class-2 family. The cofactor is adenosylcob(III)alamin.

The catalysed reaction is a 2'-deoxyribonucleoside 5'-diphosphate + [thioredoxin]-disulfide + H2O = a ribonucleoside 5'-diphosphate + [thioredoxin]-dithiol. Functionally, catalyzes the reduction of ribonucleotides to deoxyribonucleotides. May function to provide a pool of deoxyribonucleotide precursors for DNA repair during oxygen limitation and/or for immediate growth after restoration of oxygen. This chain is Vitamin B12-dependent ribonucleotide reductase (nrdJ), found in Leptospira interrogans serogroup Icterohaemorrhagiae serovar copenhageni (strain Fiocruz L1-130).